Here is a 137-residue protein sequence, read N- to C-terminus: Large-conductance mechanosensitive channel (137 aa).

2 consecutive transmembrane segments (helical) span residues 16 to 36 (VIDL…VDSI) and 83 to 103 (GNFI…FLMI).

Belongs to the MscL family. In terms of assembly, homopentamer.

The protein localises to the cell inner membrane. In terms of biological role, channel that opens in response to stretch forces in the membrane lipid bilayer. May participate in the regulation of osmotic pressure changes within the cell. This is Large-conductance mechanosensitive channel from Methylibium petroleiphilum (strain ATCC BAA-1232 / LMG 22953 / PM1).